A 94-amino-acid polypeptide reads, in one-letter code: MSEIRVEVVYALPERQYLRNVTLAEGSSVEQAIVASGLLELRGDIDLQSNKVGIYSRPAKLADVLSDGDRVEIYRPLIADPKELRRQRAEKAKK.

Belongs to the UPF0125 (RnfH) family.

This is Protein RnfH from Serratia proteamaculans (strain 568).